The primary structure comprises 236 residues: Chorionic somatomammotropin hormone 1 (236 aa).

Residues 1-36 (MAPASSHRGHQWICDLVRGSCLLLLLVVSNLLLCQG) form the signal peptide. Asn-89 carries N-linked (GlcNAc...) asparagine glycosylation. Cystine bridges form between Cys-98–Cys-214 and Cys-231–Cys-236.

This sequence belongs to the somatotropin/prolactin family.

The protein localises to the secreted. The polypeptide is Chorionic somatomammotropin hormone 1 (CSH1) (Bos taurus (Bovine)).